We begin with the raw amino-acid sequence, 265 residues long: Secreted RxLR effector protein 16 (265 aa).

A signal peptide spans 1–19; it reads MRGAFYIAIALLIVRSRTA. Residues 46–61 carry the RxLR-dEER motif; sequence RYLRGGLALSATNEER. Residues asparagine 170, asparagine 219, and asparagine 240 are each glycosylated (N-linked (GlcNAc...) asparagine).

It belongs to the RxLR effector family. Post-translationally, N-glycosylated. The putative N-glycosylation site at position 240 is essential for cell death-inducing activity.

Its subcellular location is the secreted. The protein localises to the host nucleus. Functionally, effector that acts as an elicitor that induces cell death and promotes ROS accumulation in Nicotian benthamiana. RxLR16-triggered cell death is dependent on SGT1, HSP90 and RAR1, but independent of the somatic embryogenesis receptor-like kinase SERK3/BAK1, indicating that it acts independently of the detection of cell surface pattern recognition receptors. Enhances the expressional levels of defense-associated genes involved in the salicylic acid-, jasmonate acid-, and ethylene-mediated signal transduction, resulting in disease resistance. However, as some other Plasmopara viticola RxLR effectors including RxLR1, RxLR10, RxLR30 and RxLR25, can suppress defense responses and disease resistance induced by RxLR16, it may not trigger host cell death or immune responses during physiological infection under natural conditions. The protein is Secreted RxLR effector protein 16 of Plasmopara viticola (Downy mildew of grapevine).